We begin with the raw amino-acid sequence, 646 residues long: Ribonuclease Y (646 aa).

A helical membrane pass occupies residues V4–A24. Disordered regions lie at residues P43–E62 and L69–S118. Residues V336–D402 enclose the KH domain. One can recognise an HD domain in the interval V462–G555.

It belongs to the RNase Y family.

Its subcellular location is the cell membrane. In terms of biological role, endoribonuclease that initiates mRNA decay. In Frankia casuarinae (strain DSM 45818 / CECT 9043 / HFP020203 / CcI3), this protein is Ribonuclease Y.